Here is a 282-residue protein sequence, read N- to C-terminus: Bis(5'-nucleosyl)-tetraphosphatase, symmetrical (282 aa).

The protein belongs to the Ap4A hydrolase family.

The catalysed reaction is P(1),P(4)-bis(5'-adenosyl) tetraphosphate + H2O = 2 ADP + 2 H(+). In terms of biological role, hydrolyzes diadenosine 5',5'''-P1,P4-tetraphosphate to yield ADP. The polypeptide is Bis(5'-nucleosyl)-tetraphosphatase, symmetrical (Burkholderia mallei (strain NCTC 10247)).